The chain runs to 373 residues: 3-isopropylmalate dehydrogenase (373 aa).

82-93 (GPKWGTGTVRPE) serves as a coordination point for NAD(+). Residues Arg100, Arg110, Arg139, and Asp231 each contribute to the substrate site. Positions 231, 256, and 260 each coordinate Mg(2+). 295-306 (GSAPDLPANKVN) is an NAD(+) binding site.

Belongs to the isocitrate and isopropylmalate dehydrogenases family. In terms of assembly, homodimer. Mg(2+) serves as cofactor. The cofactor is Mn(2+).

Its subcellular location is the cytoplasm. It catalyses the reaction (2R,3S)-3-isopropylmalate + NAD(+) = 4-methyl-2-oxopentanoate + CO2 + NADH. It participates in amino-acid biosynthesis; L-leucine biosynthesis; L-leucine from 3-methyl-2-oxobutanoate: step 3/4. Functionally, catalyzes the oxidation of 3-carboxy-2-hydroxy-4-methylpentanoate (3-isopropylmalate) to 3-carboxy-4-methyl-2-oxopentanoate. The product decarboxylates to 4-methyl-2 oxopentanoate. The sequence is that of 3-isopropylmalate dehydrogenase (LEU2) from Candida albicans (Yeast).